The chain runs to 752 residues: MENELVSKVKAPVPGNQTNTLNEAKCPVGAHTLAGARSNANWWPNQLNINILHQHSPLSDPMPEGFNYAEEFKTLDLDAVVKDLRHLMTDSQPWWPADYGHYGPFFIRMAWHSAGTYRIGDGRGGAGSGEQRFAPLNSWPDNGNLDKARRLLWPIKQKYGRKLSWADLMVLAGNVALESMGFKTFGFAGGREDVWEPSEDIYWGPEGKWLDDKRYSGERDLENPLGAVQMGLIYVNPEGPNGKPDPAAAAVDIRETFARMAMNDEETVALIAGGHTFGKTHGAGVPTEYVGPEPEGAGIEEQGLGWKNKLGHGHGYHTITSGLEGAWTTNPIKWDNGFFDNLFGYDWELTKSPAGANQWTPKNGAGKDTVPDAHDKTKRHAPFMATTDISLKVDPIYGPISKRFHEHPQEFADAFAKAWYKLTHRDMGPLPRYLGKLVPKEPQVWQDPVPAVDHELVNDSDVAALKAKLLASGLTVSQLVTTAWAAASSFRGSDKRGGANGARIRLTPQKDWEVNQPKELAKVLPVLEKIQHDFNAQGGKKKISLADLIILGGCAAVEEAAKKGGHSVKVPFTPGRTDASQEHTDVKSFSVMEPKADGFRNYHQKGQPRPAEEMLVDKAQLLRLTAPEMTALVGGLRVLGANYGHSKHGVFTSHPETLTNDFFVNLLDMNNRWQPSGADGVYEARDRQGDHVKWTATRVDLIFGSHSQLRAFAEVYACNDAKEKFVHDFVAAWTKVMNLDRYDLAKKKAAAN.

The disordered stretch occupies residues 1–20 (MENELVSKVKAPVPGNQTNT). Positions 111-234 (WHSAGTYRIG…LGAVQMGLIY (124 aa)) form a cross-link, tryptophyl-tyrosyl-methioninium (Trp-Tyr) (with M-260). Catalysis depends on H112, which acts as the Proton acceptor. A cross-link (tryptophyl-tyrosyl-methioninium (Tyr-Met) (with W-111)) is located at residues 234–260 (YVNPEGPNGKPDPAAAAVDIRETFARM). H275 is a heme b binding site.

It belongs to the peroxidase family. Peroxidase/catalase subfamily. As to quaternary structure, homodimer or homotetramer. The cofactor is heme b. In terms of processing, formation of the three residue Trp-Tyr-Met cross-link is important for the catalase, but not the peroxidase activity of the enzyme.

The enzyme catalyses H2O2 + AH2 = A + 2 H2O. It catalyses the reaction 2 H2O2 = O2 + 2 H2O. Bifunctional enzyme with both catalase and broad-spectrum peroxidase activity. This chain is Catalase-peroxidase, found in Koribacter versatilis (strain Ellin345).